Consider the following 517-residue polypeptide: MTNIHPESPEDFEFIETPAASCTTPADDCGVRTTSYPAIKNAPVPADAAGSDSFSNTLLILLLVVIPWYTARQIGGGLKTTIFFAIFTTIPILMAFWSIASSISPRKNEKAKYAGRPVEHYLHFHSEHDRATYRGKSKIPMEVFYEKYFAGEVDFKMDALEALEFRHDWANFRFTMGLFKHFLFGFIPELLVHSRSQDEEQVRDHYDRGDDFYAWFLGPRMIYTSGIISDIKKEETLEQLQDNKLAVVCEKVGLKPGDTVLDLGCGWGTLAKYASVHYGAQVTGITLGRNQTAWGNKGLRAAGIDESQSRILCMDYRDAPRVPGGYKKITCLEMAEHVGVRHFGSFLAQVNEMLDDDGVFFLQIAGLRKSWQYEDLIWGLFMNKYIFPGADASTPLGFVVDKLEAAGFEIKGIDTIGVHYSATLWRWYRNWLGNGEKVKAKYGERWYRIWEYFLAYSTITSRQGGATCWQITLVKNINSTHRVEGINSQYGLTGAREAAIASVGKGSLPSAHVTFKA.

The next 2 membrane-spanning stretches (helical) occupy residues L58 to L78 and T80 to A100. Residues Y223 to T224, T286 to Q291, and Y316 to R317 contribute to the S-adenosyl-L-methionine site. Residue N290 is glycosylated (N-linked (GlcNAc...) asparagine). A glycan (N-linked (GlcNAc...) asparagine) is linked at N478.

The protein belongs to the CFA/CMAS family.

It is found in the membrane. The catalysed reaction is a (4E,8E)-4-sphinga-4,8-dienine ceramide + S-adenosyl-L-methionine = a 9-methyl-(4E,8E)-sphinga-4,8-dienine ceramide + S-adenosyl-L-homocysteine + H(+). The protein operates within lipid metabolism; sphingolipid metabolism. In terms of biological role, catalyzes methylation of the sphingoid base component of glucosylceramides (GluCers) at the C9-position. Sphingolipid C9-methylation requires 4,8-desaturated ceramides as substrates. Glucosylceramides play important roles in growth, differentiation and pathogenicity. The methyl group at the C9-position distinguishes fungal glucosylceramides from those of plants and animals and may thus play a role in host-pathogen interactions enabling the host to recognize the fungal attack and initiate specific defense responses. The chain is Sphingolipid C9-methyltransferase A from Emericella nidulans (strain FGSC A4 / ATCC 38163 / CBS 112.46 / NRRL 194 / M139) (Aspergillus nidulans).